A 340-amino-acid polypeptide reads, in one-letter code: Tetraacyldisaccharide 4'-kinase (340 aa).

Residue 47–54 coordinates ATP; sequence SVGGTGKT.

The protein belongs to the LpxK family.

It carries out the reaction a lipid A disaccharide + ATP = a lipid IVA + ADP + H(+). It functions in the pathway glycolipid biosynthesis; lipid IV(A) biosynthesis; lipid IV(A) from (3R)-3-hydroxytetradecanoyl-[acyl-carrier-protein] and UDP-N-acetyl-alpha-D-glucosamine: step 6/6. In terms of biological role, transfers the gamma-phosphate of ATP to the 4'-position of a tetraacyldisaccharide 1-phosphate intermediate (termed DS-1-P) to form tetraacyldisaccharide 1,4'-bis-phosphate (lipid IVA). The protein is Tetraacyldisaccharide 4'-kinase of Flavobacterium johnsoniae (strain ATCC 17061 / DSM 2064 / JCM 8514 / BCRC 14874 / CCUG 350202 / NBRC 14942 / NCIMB 11054 / UW101) (Cytophaga johnsonae).